The sequence spans 323 residues: 4-hydroxyphenylpyruvate 3-dimethylallyltransferase (323 aa).

Substrate contacts are provided by R160 and E281.

It belongs to the aromatic prenyltransferase family. Monomer.

It localises to the cytoplasm. The enzyme catalyses 3-(4-hydroxyphenyl)pyruvate + dimethylallyl diphosphate = 3-dimethylallyl-4-hydroxyphenylpyruvate + diphosphate. The protein operates within antibiotic biosynthesis; novobiocin biosynthesis. In terms of biological role, magnesium-independent aromatic prenyltransferase that catalyzes the irreversible transfer of a dimethylallyl group to 4-hydroxyphenylpyruvate to produce the ring A structure in the novobiocin biosynthesis pathway. Novobiocin is an aminocoumarin family antibiotic that targets bacterial DNA gyrases. It is able to prenylate many different compounds, including the phenylpropanoids 4-coumarate and caffeate, the plant polyketide resveratrol, the (iso)flavonoid naringenin, apigenin, daidzein and genistein, and the dihydroxynaphthalenes 1,6-DHN and 2,7-DHN. This is 4-hydroxyphenylpyruvate 3-dimethylallyltransferase from Streptomyces niveus (Streptomyces spheroides).